A 443-amino-acid polypeptide reads, in one-letter code: C4-dicarboxylate transport protein (443 aa).

Transmembrane regions (helical) follow at residues 10–30 (SLYF…HFYP), 46–66 (LIKM…IAGM), 78–98 (YALL…LIVV), 130–150 (SIVG…FANG), 152–172 (ILQV…LGAY), 199–219 (PLGA…GSLV), 224–244 (LMIC…GAIC), 291–311 (VVGL…SIYL), 332–352 (ITLL…TGSG), and 354–374 (IVLA…LALI). The segment at 415–443 (ELASGGRPITDTRETDDLGVAEGPAPSIK) is disordered.

It belongs to the dicarboxylate/amino acid:cation symporter (DAACS) (TC 2.A.23) family.

Its subcellular location is the cell inner membrane. Responsible for the transport of dicarboxylates such as succinate, fumarate, and malate from the periplasm across the membrane. The protein is C4-dicarboxylate transport protein of Pseudomonas fluorescens (strain ATCC BAA-477 / NRRL B-23932 / Pf-5).